We begin with the raw amino-acid sequence, 262 residues long: Acyl-[acyl-carrier-protein]--UDP-N-acetylglucosamine O-acyltransferase (262 aa).

Belongs to the transferase hexapeptide repeat family. LpxA subfamily. Homotrimer.

It localises to the cytoplasm. The enzyme catalyses a (3R)-hydroxyacyl-[ACP] + UDP-N-acetyl-alpha-D-glucosamine = a UDP-3-O-[(3R)-3-hydroxyacyl]-N-acetyl-alpha-D-glucosamine + holo-[ACP]. The protein operates within glycolipid biosynthesis; lipid IV(A) biosynthesis; lipid IV(A) from (3R)-3-hydroxytetradecanoyl-[acyl-carrier-protein] and UDP-N-acetyl-alpha-D-glucosamine: step 1/6. Its function is as follows. Involved in the biosynthesis of lipid A, a phosphorylated glycolipid that anchors the lipopolysaccharide to the outer membrane of the cell. This is Acyl-[acyl-carrier-protein]--UDP-N-acetylglucosamine O-acyltransferase from Wigglesworthia glossinidia brevipalpis.